The sequence spans 872 residues: Alanine--tRNA ligase (872 aa).

His567, His571, Cys669, and His673 together coordinate Zn(2+).

This sequence belongs to the class-II aminoacyl-tRNA synthetase family. The cofactor is Zn(2+).

It localises to the cytoplasm. It catalyses the reaction tRNA(Ala) + L-alanine + ATP = L-alanyl-tRNA(Ala) + AMP + diphosphate. In terms of biological role, catalyzes the attachment of alanine to tRNA(Ala) in a two-step reaction: alanine is first activated by ATP to form Ala-AMP and then transferred to the acceptor end of tRNA(Ala). Also edits incorrectly charged Ser-tRNA(Ala) and Gly-tRNA(Ala) via its editing domain. The protein is Alanine--tRNA ligase of Streptococcus gordonii (strain Challis / ATCC 35105 / BCRC 15272 / CH1 / DL1 / V288).